Consider the following 598-residue polypeptide: Nuclear receptor subfamily 4 group A member 1 (598 aa).

Disordered regions lie at residues 1–43 (MPCI…PEAA) and 128–151 (GSDY…PPQL). Over residues 134–145 (SPCSAPSPSTPS) the composition is skewed to low complexity. The interval 171-466 (RAWTEQLPKA…PAEGKLIFCS (296 aa)) is required for nuclear import. A DNA-binding region (nuclear receptor) is located at residues 264 to 339 (EGRCAVCGDN…VGMVKEVVRT (76 aa)). 2 NR C4-type zinc fingers span residues 267 to 287 (CAVC…CEGC) and 303 to 327 (CLAN…FQKC). A required for binding NBRE-containing DNA region spans residues 268–354 (AVCGDNASCQ…RRGRLPSKPK (87 aa)). A required for the interaction with RXRA region spans residues 299 to 361 (AKYICLANKD…KPKQPPETSP (63 aa)). At serine 341 the chain carries Phosphoserine; by PKA. A disordered region spans residues 341–361 (SLKGRRGRLPSKPKQPPETSP). The residue at position 351 (serine 351) is a Phosphoserine; by PKA, RPS6KA1 and RPS6KA3. One can recognise an NR LBD domain in the interval 360-595 (SPAHLLTSLV…PIVDKIFMDT (236 aa)). Residues 521-544 (PRRVEELQNRIASCLKEHVSAEAG) form a binds lipopolysaccharide region. The tract at residues 584–595 (PPPIVDKIFMDT) is AF-2.

Belongs to the nuclear hormone receptor family. NR4 subfamily. Binds the NGFI-B response element (NBRE) as a monomer. Binds the Nur response element (NurRE), consisting of two inverse NBRE-related octanucleotide repeats separated by 6 base-pairs, as a dimer. Interacts (via N-terminus) with NLRP3 (via LRR repeat domain); the interaction is direct, requires binding of NR4A1/Nur77 to NBRE-containing dsDNA and lipopolysaccharide, and leads to non-canonical NLRP3 inflammasome activation. Interacts with GADD45GIP1. Interacts with STK11. Interacts with IFI27. Heterodimer (via DNA-binding domain) with RXRA (via C-terminus); DNA-binding of the heterodimer is enhanced by 9-cis retinoic acid. Competes for the RXRA interaction with EP300 and thereby attenuates EP300 mediated acetylation of RXRA. Interacts with NCOA1. Interacts with NCOA2. Interacts with NCOA3. The cofactor is Zn(2+). Phosphorylated at Ser-351 by RPS6KA1 and RPS6KA3 in response to mitogenic or stress stimuli. Post-translationally, acetylated by p300/CBP, acetylation increases stability. Deacetylated by HDAC1.

It is found in the nucleus. The protein resides in the cytoplasm. The protein localises to the cytosol. It localises to the mitochondrion. Functionally, orphan nuclear receptor. Binds the NGFI-B response element (NBRE) 5'-AAAGGTCA-3'. Binds 9-cis-retinoic acid outside of its ligand-binding (NR LBD) domain. Participates in energy homeostasis by sequestrating the kinase STK11 in the nucleus, thereby attenuating cytoplasmic AMPK activation. Regulates the inflammatory response in macrophages by regulating metabolic adaptations during inflammation, including repressing the transcription of genes involved in the citric acid cycle (TCA). Inhibits NF-kappa-B signaling by binding to low-affinity NF-kappa-B binding sites, such as at the IL2 promoter. May act concomitantly with NR4A2 in regulating the expression of delayed-early genes during liver regeneration. Plays a role in the vascular response to injury. In terms of biological role, in the cytosol, upon its detection of both bacterial lipopolysaccharide (LPS) and NBRE-containing mitochondrial DNA released by GSDMD pores during pyroptosis, it promotes non-canonical NLRP3 inflammasome activation by stimulating association of NLRP3 and NEK7. This is Nuclear receptor subfamily 4 group A member 1 (NR4A1) from Bos taurus (Bovine).